Consider the following 172-residue polypeptide: Protein-export protein SecB (172 aa).

Belongs to the SecB family. As to quaternary structure, homotetramer, a dimer of dimers. One homotetramer interacts with 1 SecA dimer.

The protein localises to the cytoplasm. Its function is as follows. One of the proteins required for the normal export of preproteins out of the cell cytoplasm. It is a molecular chaperone that binds to a subset of precursor proteins, maintaining them in a translocation-competent state. It also specifically binds to its receptor SecA. The protein is Protein-export protein SecB of Bordetella avium (strain 197N).